We begin with the raw amino-acid sequence, 118 residues long: Beta-2-microglobulin (118 aa).

Positions 1–21 are cleaved as a signal peptide; the sequence is MESRWGIVVIGLLCCVSWVEA. Residues 26–113 form the Ig-like C1-type domain; it reads PKIQVYTRSP…THNSVTKSVK (88 aa). Residues C46 and C101 are joined by a disulfide bond.

Belongs to the beta-2-microglobulin family. In terms of assembly, heterodimer of an alpha chain and a beta chain. Beta-2-microglobulin is the beta-chain of major histocompatibility complex class I molecules.

It localises to the secreted. Component of the class I major histocompatibility complex (MHC). Involved in the presentation of peptide antigens to the immune system. The sequence is that of Beta-2-microglobulin (B2M) from Tachyglossus aculeatus aculeatus (Southeast Australian short-beaked echidna).